The sequence spans 255 residues: Leucyl/phenylalanyl-tRNA--protein transferase (255 aa).

Belongs to the L/F-transferase family.

The protein localises to the cytoplasm. It carries out the reaction N-terminal L-lysyl-[protein] + L-leucyl-tRNA(Leu) = N-terminal L-leucyl-L-lysyl-[protein] + tRNA(Leu) + H(+). It catalyses the reaction N-terminal L-arginyl-[protein] + L-leucyl-tRNA(Leu) = N-terminal L-leucyl-L-arginyl-[protein] + tRNA(Leu) + H(+). The enzyme catalyses L-phenylalanyl-tRNA(Phe) + an N-terminal L-alpha-aminoacyl-[protein] = an N-terminal L-phenylalanyl-L-alpha-aminoacyl-[protein] + tRNA(Phe). Functionally, functions in the N-end rule pathway of protein degradation where it conjugates Leu, Phe and, less efficiently, Met from aminoacyl-tRNAs to the N-termini of proteins containing an N-terminal arginine or lysine. This is Leucyl/phenylalanyl-tRNA--protein transferase from Burkholderia thailandensis (strain ATCC 700388 / DSM 13276 / CCUG 48851 / CIP 106301 / E264).